Here is a 222-residue protein sequence, read N- to C-terminus: 2-C-methyl-D-erythritol 4-phosphate cytidylyltransferase (222 aa).

The protein belongs to the IspD/TarI cytidylyltransferase family. IspD subfamily.

It catalyses the reaction 2-C-methyl-D-erythritol 4-phosphate + CTP + H(+) = 4-CDP-2-C-methyl-D-erythritol + diphosphate. Its pathway is isoprenoid biosynthesis; isopentenyl diphosphate biosynthesis via DXP pathway; isopentenyl diphosphate from 1-deoxy-D-xylulose 5-phosphate: step 2/6. Functionally, catalyzes the formation of 4-diphosphocytidyl-2-C-methyl-D-erythritol from CTP and 2-C-methyl-D-erythritol 4-phosphate (MEP). The sequence is that of 2-C-methyl-D-erythritol 4-phosphate cytidylyltransferase from Thermotoga neapolitana (strain ATCC 49049 / DSM 4359 / NBRC 107923 / NS-E).